We begin with the raw amino-acid sequence, 207 residues long: Small ribosomal subunit protein uS4 (207 aa).

The tract at residues 20–45 (TPKAARYMEKRPYAPGEHGRTKRKAD) is disordered. The S4 RNA-binding domain maps to 93–158 (MRLDALVLRA…TEPFQVAAAG (66 aa)).

The protein belongs to the universal ribosomal protein uS4 family. As to quaternary structure, part of the 30S ribosomal subunit. Contacts protein S5. The interaction surface between S4 and S5 is involved in control of translational fidelity.

In terms of biological role, one of the primary rRNA binding proteins, it binds directly to 16S rRNA where it nucleates assembly of the body of the 30S subunit. Functionally, with S5 and S12 plays an important role in translational accuracy. In Leifsonia xyli subsp. xyli (strain CTCB07), this protein is Small ribosomal subunit protein uS4.